The chain runs to 241 residues: Ribonuclease PH (241 aa).

Residues Arg86 and 124–126 (GTR) contribute to the phosphate site.

The protein belongs to the RNase PH family. As to quaternary structure, homohexameric ring arranged as a trimer of dimers.

It catalyses the reaction tRNA(n+1) + phosphate = tRNA(n) + a ribonucleoside 5'-diphosphate. Phosphorolytic 3'-5' exoribonuclease that plays an important role in tRNA 3'-end maturation. Removes nucleotide residues following the 3'-CCA terminus of tRNAs; can also add nucleotides to the ends of RNA molecules by using nucleoside diphosphates as substrates, but this may not be physiologically important. Probably plays a role in initiation of 16S rRNA degradation (leading to ribosome degradation) during starvation. The protein is Ribonuclease PH of Hamiltonella defensa subsp. Acyrthosiphon pisum (strain 5AT).